The sequence spans 235 residues: Ribonuclease S-2 (235 aa).

The signal sequence occupies residues 1-31 (MATVQKSQHSHFFLLVGCIVHLSNFCSTTTA). Gln41 serves as a coordination point for RNA. A disulfide bond links Cys47 and Cys54. His66 contributes to the RNA binding site. Catalysis depends on His66, which acts as the Proton donor. The N-linked (GlcNAc...) asparagine glycan is linked to Asn72. Intrachain disulfides connect Cys80-Cys129, Cys189-Cys217, and Cys200-Cys211. RNA contacts are provided by residues 105 to 106 (DL), Arg108, and Phe118. Gln122 is an active-site residue. 125–126 (KH) serves as a coordination point for RNA. Residue His126 is the Proton acceptor of the active site.

It belongs to the RNase T2 family.

The protein resides in the secreted. It is found in the extracellular space. It carries out the reaction a ribonucleotidyl-ribonucleotide-RNA + H2O = a 3'-end 3'-phospho-ribonucleotide-RNA + a 5'-end dephospho-ribonucleoside-RNA + H(+). Functionally, self-incompatibility (SI) is the inherited ability of a flowering plant to prevent self-fertilization by discriminating between self and non-self pollen during pollination. In many species, self-incompatibility is controlled by the single, multiallelic locus S. This chain is Ribonuclease S-2 (S2), found in Antirrhinum hispanicum (Snapdragon).